Reading from the N-terminus, the 478-residue chain is Multidrug resistance outer membrane protein MdtQ (478 aa).

Residues 1-21 (MNRDSFYPAIACFPLLLMLAG) form the signal peptide. A lipid anchor (N-palmitoyl cysteine) is attached at Cys22. Cys22 is lipidated: S-diacylglycerol cysteine.

The protein belongs to the outer membrane factor (OMF) (TC 1.B.17) family.

Its subcellular location is the cell outer membrane. Its function is as follows. Could be involved in resistance to puromycin, acriflavine and tetraphenylarsonium chloride. In Escherichia coli O157:H7, this protein is Multidrug resistance outer membrane protein MdtQ (mdtQ).